Reading from the N-terminus, the 2367-residue chain is RNA1 polyprotein (2367 aa).

At 587–1194 (AKCEDLAVVS…GGRLLLILCS (608 aa)) the chain is on the cytoplasmic side. The region spanning 776–940 (ELRTLRNDMA…AGVAFNPHDS (165 aa)) is the SF3 helicase domain. An ATP-binding site is contributed by 804–811 (GPPGVGKT). A helical transmembrane segment spans residues 1195-1215 (CMLLGIACYTFFNALAILIGG). The Lumenal portion of the chain corresponds to 1216 to 1235 (TSVAAGAAAMVDIGACGSTS). The region spanning 1258–1468 (PAVWSEETGH…YVCKFPHIEV (211 aa)) is the Peptidase C3 domain. Active-site for picornain 3C-like protease activity residues include His-1302, Glu-1339, and Cys-1432. Residues 1832–1957 (DKMYCCDYSK…GIHPNIESAF (126 aa)) enclose the RdRp catalytic domain.

This sequence belongs to the nepoviruses RNA1 polyprotein family. In terms of processing, specific enzymatic cleavages by picornain 3C-like protease in vivo yield mature proteins. Picornain 3C-like protease is autocatalytically processed. VPg is uridylylated by the polymerase and is covalently linked to the 5'-end of genomic RNA. This uridylylated form acts as a nucleotide-peptide primer for the polymerase.

It is found in the host endoplasmic reticulum lumen. The protein resides in the host endoplasmic reticulum membrane. The enzyme catalyses RNA(n) + a ribonucleoside 5'-triphosphate = RNA(n+1) + diphosphate. Functionally, picornain 3C-like protease is a thiol protease that cleaves the P1 and P2 polyproteins. This chain is RNA1 polyprotein, found in Fragaria vesca (Woodland strawberry).